A 103-amino-acid polypeptide reads, in one-letter code: MIELSYAPDVAGRRSNWPKGSGVNTWTAIRWTFAEDSPYVGTGLERMASDTHGGGGGRPVTPPPPGMHHLGCSRGVLLISSQRDAGHKTCDPAAGGTLTSVLT.

Disordered stretches follow at residues 1-20 and 44-71; these read MIELSYAPDVAGRRSNWPKG and LERMASDTHGGGGGRPVTPPPPGMHHLG. The first 34 residues, 1–34, serve as a signal peptide directing secretion; sequence MIELSYAPDVAGRRSNWPKGSGVNTWTAIRWTFA.

This is an uncharacterized protein from Mycobacterium tuberculosis (strain CDC 1551 / Oshkosh).